A 1055-amino-acid chain; its full sequence is MAPAATAAASSGKGSFDLATLFVADKAARDEAGLALADAVKKSGVEFFTQIGFNDAIVKALNDKKSQSAREGACEVISTLCENGAAQLLEPHVISSAENTPFPALLEAFADKVAAVKTAAIAAVKAIVQSMNPWASFVLLPALLNLIRTSGKWQIKAGSLEILQQLITSAPYQMGEAMPDLVPVLAGAVWDTKSDVKKAAKATLEKAVSLVENKDIEKFVPALVKSLLNPIEEVPKTISLLSATTFVSEVTAPTISLIAPLLIRGLDERPTATKRKVCVIADNMSKLVDSEYTVRPFLPQLLPRLIKTAETIADPEARSVANRAIVTLRRIGKVPVESDGSDLPPLPVAEGPHLATNFVALVKKHGGVSVEQTNPGLAYAGVLAASLVNHHNFDQKTWESTLPPYLKLALPSYDSLPAVRELLQKKADEAETDDAKFPDEEEGEDLCNIEQFNLAYGAKILLHHANMRLKRGHRYGLCGRNGSGKSTLMNAIINNQVEGFPPPTEVRTFYVQHDIDGSEAEISILDWVLSDKRLLATPEEIKSTLESVGFDEVKQKNSIGSLSGGWKMKLALARAILFKADILLLDEPTNHLDVLNVDWLINYLTSLTRCTSIIVSHDSDFLNRTVTDVLHLNNFKLKRYPGNLEEFVKHVPEAKSYYQLDVAEDYQFKLPNPPLLDGVKTKEKSLLKMRNVSFQYPGSSIQQLYDISLQVSLSSRVAVLGPNGSGKSTLVKLLTGETEPNLGGQVWKHPNLVIGYVAQHAFHHIDNHLDSTPLEYMLWRYQTGEDLEEMHKANRVMTEAELAKMKEGATVIKDGVKRIIDELVARKKLKQSYEYEVSFKGMSSAENIWISRDELVARGFEKKVMELDTREAQRLGLMRPLVRREIEKHFEDFGLDAEFVSHNSMRGLSGGQKVKVVLGAATWRRPHIICLDEPTNYLDRESLAALIAALKNFEGGVLIITHNREFSESICTEVWAMREGHLEASGHNWVEGQGSGERIDKKAGDDDEVEYDALGNPIVKAKKEKKLSAADKRKAKKDRMARRKRGEEVFSDEEL.

Val45 contacts ADP. 7 HEAT repeats span residues 45–86, 96–133, 135–172, 175–213, 217–255, 257–290, and 295–337; these read VEFF…NGAA, SAEN…SMNP, ASFV…SAPY, GEAM…LVEN, EKFV…APTI, LIAP…LVDS, and RPFL…VPVE. ABC transporter domains follow at residues 447 to 659 and 687 to 1004; these read CNIE…SYYQ and LKMR…KKAG. Positions 723, 933, 936, and 962 each coordinate ADP. Disordered regions lie at residues 987–1006 and 1024–1055; these read HNWV…AGDD and EKKL…DEEL. Residues 1033-1044 are compositionally biased toward basic residues; it reads RKAKKDRMARRK.

Belongs to the ABC transporter superfamily. ABCF family. EF3 subfamily. In terms of assembly, associates with ribosomes.

It localises to the cytoplasm. The protein resides in the cytosol. The enzyme catalyses ATP + H2O = ADP + phosphate + H(+). It participates in protein biosynthesis; polypeptide chain elongation. Functionally, ribosome-dependent ATPase that functions in cytoplasmic translation elongation. Required for the ATP-dependent release of deacylated tRNA from the ribosomal E-site during protein biosynthesis. Stimulates the eEF1A-dependent binding of aminoacyl-tRNA to the ribosomal A-site, which has reduced affinity for tRNA as long as the E-site is occupied. Assists translation termination by stimulating the release of nascent protein from the ribosome by release factors. Appears to target calcium-channel protein CCH1 to the plasma membrane. The protein is Elongation factor 3 of Cryptococcus neoformans var. neoformans serotype D (strain JEC21 / ATCC MYA-565) (Filobasidiella neoformans).